Here is a 990-residue protein sequence, read N- to C-terminus: Insulin-degrading enzyme (990 aa).

Position 81 (His-81) interacts with Zn(2+). The active-site Proton acceptor is Glu-84. Residues His-85 and Glu-162 each coordinate Zn(2+).

Belongs to the peptidase M16 family. The cofactor is Zn(2+).

The enzyme catalyses Degradation of insulin, glucagon and other polypeptides. No action on proteins.. Its function is as follows. Can cleave insulin and TGF-alpha. This Drosophila melanogaster (Fruit fly) protein is Insulin-degrading enzyme (Ide).